Consider the following 791-residue polypeptide: Metabotropic glutamate receptor-like protein D (791 aa).

An N-terminal signal peptide occupies residues 1–22; that stretch reads MKINSFLIILILLFISIKNSNG. The Extracellular segment spans residues 23-390; sequence EPEKKFKLIT…TEVYQSRPIQ (368 aa). N-linked (GlcNAc...) asparagine glycosylation is found at asparagine 72, asparagine 168, asparagine 279, asparagine 290, asparagine 306, and asparagine 349. The chain crosses the membrane as a helical span at residues 391-411; the sequence is IAISSISSFFIVTVLVMMGLV. Topologically, residues 412 to 424 are cytoplasmic; that stretch reads VRFRKNPSIRSAS. Residues 425–445 form a helical membrane-spanning segment; that stretch reads PIFLNFILFGALIIYVGIIIW. Residues 446-453 are Extracellular-facing; sequence SSSINSAS. A helical membrane pass occupies residues 454-474; the sequence is CNAQFWLVTLGFTTLIGSLVV. Over 475–495 the chain is Cytoplasmic; the sequence is KNVRIWLIFDNPELKLVKITN. The chain crosses the membrane as a helical span at residues 496–516; that stretch reads LQLVPWVGVCLVINIILMSIL. At 517 to 550 the chain is on the extracellular side; that stretch reads TSVGDLREVNAQGIDSLGKYEFMRICKMNSSGAS. Asparagine 545 is a glycosylation site (N-linked (GlcNAc...) asparagine). A helical transmembrane segment spans residues 551–571; the sequence is TLYTILAYFAALLLIGVFVSW. Topologically, residues 572-585 are cytoplasmic; sequence KIRIVDILEFNESK. A helical transmembrane segment spans residues 586 to 606; that stretch reads AIANTLYAISFCLFVIVPLMI. Topologically, residues 607–615 are extracellular; it reads SPQDKQSEK. A helical membrane pass occupies residues 616 to 636; sequence IILCIAGLFIVTAAVLIIFVP. Over 637-791 the chain is Cytoplasmic; it reads KFYRVYIFGS…KNEENNDGDN (155 aa). 2 disordered regions span residues 664–715 and 746–791; these read TARA…SEPN and IITE…DGDN. Residues 674–689 show a composition bias toward gly residues; sequence SSGGGAGSGGATGGSG. A compositionally biased stretch (low complexity) spans 749-760; it reads ENGQDSNNNNNN. Residues 752-781 are a coiled coil; sequence QDSNNNNNNEENKDNNIENNKISEEIKENL. Basic and acidic residues predominate over residues 761–785; that stretch reads EENKDNNIENNKISEEIKENLKNEE.

In the N-terminal section; belongs to the BMP lipoprotein family. The protein in the C-terminal section; belongs to the G-protein coupled receptor 3 family. GABA-B receptor subfamily.

It is found in the membrane. The sequence is that of Metabotropic glutamate receptor-like protein D (grlD) from Dictyostelium discoideum (Social amoeba).